Reading from the N-terminus, the 302-residue chain is Recombination-associated protein RdgC (302 aa).

The protein belongs to the RdgC family.

The protein resides in the cytoplasm. It localises to the nucleoid. Functionally, may be involved in recombination. This is Recombination-associated protein RdgC from Actinobacillus pleuropneumoniae serotype 7 (strain AP76).